The primary structure comprises 178 residues: N-alpha-acetyltransferase 80 (178 aa).

Positions 26–178 (VPIHNYPELM…AKKKYMKKVL (153 aa)) constitute an N-acetyltransferase domain. Substrate is bound by residues R48, 53-56 (RMRS), N88, and S98. Residues 99–101 (VVV) and 107–112 (GQGFGK) contribute to the acetyl-CoA site. Position 134 (S134) interacts with substrate. Residue Q138 coordinates acetyl-CoA.

The protein belongs to the acetyltransferase family.

It carries out the reaction N-terminal L-aspartyl-L-aspartyl-L-aspartyl-[protein] + acetyl-CoA = N-terminal N-acetyl-L-aspartyl-L-aspartyl-L-aspartyl-[protein] + CoA + H(+). The catalysed reaction is N-terminal L-glutamyl-L-glutamyl-L-glutamyl-[protein] + acetyl-CoA = N-terminal N-acetyl-L-glutamyl-L-glutamyl-L-glutamyl-[protein] + CoA + H(+). Its function is as follows. N-alpha-acetyltransferase that acetylates the amino terminal acidic residue of proteins devoid of initiator methionine. Preferentially acts on proteins starting with Asp-Asp-Asp and Glu-Glu-Glu sequences. In vitro, shows high activity towards N-terminal sequences starting with Met-Asp-Glu-Leu, Met-Glu-Glu-Glu and Met-Asp-Asp-Asp. This Drosophila melanogaster (Fruit fly) protein is N-alpha-acetyltransferase 80.